The primary structure comprises 291 residues: Ribosomal protein L11 methyltransferase (291 aa).

Residues threonine 136, glycine 159, aspartate 181, and asparagine 228 each coordinate S-adenosyl-L-methionine.

The protein belongs to the methyltransferase superfamily. PrmA family.

It is found in the cytoplasm. The enzyme catalyses L-lysyl-[protein] + 3 S-adenosyl-L-methionine = N(6),N(6),N(6)-trimethyl-L-lysyl-[protein] + 3 S-adenosyl-L-homocysteine + 3 H(+). Its function is as follows. Methylates ribosomal protein L11. The sequence is that of Ribosomal protein L11 methyltransferase from Rhizobium meliloti (strain 1021) (Ensifer meliloti).